Reading from the N-terminus, the 289-residue chain is 7-methylguanosine phosphate-specific 5'-nucleotidase (289 aa).

D38 serves as the catalytic Nucleophile. 2 residues coordinate Mg(2+): D38 and D40. D40 functions as the Proton donor in the catalytic mechanism. Residue E85 coordinates CMP. E85 provides a ligand contact to N(7)-methyl-GMP. Substrate-binding positions include 153 to 154 and K202; that span reads SA. D227 lines the Mg(2+) pocket.

Belongs to the pyrimidine 5'-nucleotidase family. Monomer.

The protein localises to the cytoplasm. It catalyses the reaction N(7)-methyl-GMP + H2O = N(7)-methylguanosine + phosphate. The enzyme catalyses CMP + H2O = cytidine + phosphate. The catalysed reaction is a ribonucleoside 5'-phosphate + H2O = a ribonucleoside + phosphate. In terms of biological role, specifically hydrolyzes 7-methylguanosine monophosphate (m(7)GMP) to 7-methylguanosine and inorganic phosphate. The specific activity for m(7)GMP may protect cells against undesired salvage of m(7)GMP and its incorporation into nucleic acids. Also has weak activity for CMP. UMP and purine nucleotides are poor substrates. The sequence is that of 7-methylguanosine phosphate-specific 5'-nucleotidase (NT5C3B) from Gallus gallus (Chicken).